We begin with the raw amino-acid sequence, 103 residues long: Large ribosomal subunit protein uL24 (103 aa).

Belongs to the universal ribosomal protein uL24 family. In terms of assembly, part of the 50S ribosomal subunit.

Functionally, one of two assembly initiator proteins, it binds directly to the 5'-end of the 23S rRNA, where it nucleates assembly of the 50S subunit. In terms of biological role, one of the proteins that surrounds the polypeptide exit tunnel on the outside of the subunit. The protein is Large ribosomal subunit protein uL24 of Vesicomyosocius okutanii subsp. Calyptogena okutanii (strain HA).